We begin with the raw amino-acid sequence, 310 residues long: Olfactory receptor 2A14 (310 aa).

The Extracellular portion of the chain corresponds to 1 to 24 (MEGNKTWITDITLPRFQVGPALEI). N4 carries N-linked (GlcNAc...) asparagine glycosylation. Residues 25 to 48 (LLCGLFSAFYTLTLLGNGVIFGII) traverse the membrane as a helical segment. Residues 49–56 (CLDCKLHT) lie on the Cytoplasmic side of the membrane. A helical transmembrane segment spans residues 57 to 78 (PMYFFLSHLAIVDISYASNYVP). The Extracellular portion of the chain corresponds to 79–99 (KMLTNLMNQESTISFFPCIMQ). C96 and C188 are joined by a disulfide. The helical transmembrane segment at 100-119 (TFLYLAFAHVECLILVVMSY) threads the bilayer. Over 120-138 (DRYADICHPLRYNSLMSWR) the chain is Cytoplasmic. The helical transmembrane segment at 139–157 (VCTVLAVASWVFSFLLALV) threads the bilayer. The Extracellular segment spans residues 158–194 (PLVLILSLPFCGPHEINHFFCEILSVLKLACADTWLN). Residues 195–218 (QVVIFAACVFILVGPLCLVLVSYL) traverse the membrane as a helical segment. The Cytoplasmic portion of the chain corresponds to 219–235 (RILAAILRIQSGEGRRK). A helical membrane pass occupies residues 236 to 258 (AFSTCSSHLCVVGLFFGSAIVTY). The Extracellular segment spans residues 259–271 (MAPKSRHPEEQQK). A helical membrane pass occupies residues 272-291 (VLSLFYSLFNPMLNPLIYSL). Topologically, residues 292 to 310 (RNAEVKGALRRALRKERLT) are cytoplasmic.

It belongs to the G-protein coupled receptor 1 family.

The protein localises to the cell membrane. Odorant receptor. This chain is Olfactory receptor 2A14 (OR2A14), found in Homo sapiens (Human).